The chain runs to 376 residues: ATP phosphoribosyltransferase regulatory subunit (376 aa).

It belongs to the class-II aminoacyl-tRNA synthetase family. HisZ subfamily. Heteromultimer composed of HisG and HisZ subunits.

The protein localises to the cytoplasm. The protein operates within amino-acid biosynthesis; L-histidine biosynthesis; L-histidine from 5-phospho-alpha-D-ribose 1-diphosphate: step 1/9. In terms of biological role, required for the first step of histidine biosynthesis. May allow the feedback regulation of ATP phosphoribosyltransferase activity by histidine. The sequence is that of ATP phosphoribosyltransferase regulatory subunit from Brucella canis (strain ATCC 23365 / NCTC 10854 / RM-666).